Reading from the N-terminus, the 129-residue chain is Small ribosomal subunit protein uS9 (129 aa).

A compositionally biased stretch (basic and acidic residues) spans 104-113 (TRDSRVVERK). A disordered region spans residues 104–129 (TRDSRVVERKKPGKRKARRSRQFSKR). A compositionally biased stretch (basic residues) spans 114–129 (KPGKRKARRSRQFSKR).

Belongs to the universal ribosomal protein uS9 family.

In Sulfurimonas denitrificans (strain ATCC 33889 / DSM 1251) (Thiomicrospira denitrificans (strain ATCC 33889 / DSM 1251)), this protein is Small ribosomal subunit protein uS9.